A 913-amino-acid polypeptide reads, in one-letter code: DNA polymerase (913 aa).

Residues 182 to 401 form a contains conserved residues essential for 3' -&gt; 5' exonuclease activities region; sequence PLIIASWDIE…AYARKDTDLP (220 aa).

It belongs to the DNA polymerase type-B family.

The enzyme catalyses DNA(n) + a 2'-deoxyribonucleoside 5'-triphosphate = DNA(n+1) + diphosphate. In terms of biological role, in addition to polymerase activity, this DNA polymerase potentially exhibits 3' to 5' exonuclease activity. This is DNA polymerase (DPO) from Chlorella (PBCV-NY2A).